The sequence spans 167 residues: GTP-dependent dephospho-CoA kinase (167 aa).

Positions 39, 41, 58, 60, and 117 each coordinate GTP.

This sequence belongs to the GTP-dependent DPCK family.

It carries out the reaction 3'-dephospho-CoA + GTP = GDP + CoA + H(+). The protein operates within cofactor biosynthesis; coenzyme A biosynthesis. Functionally, catalyzes the GTP-dependent phosphorylation of the 3'-hydroxyl group of dephosphocoenzyme A to form coenzyme A (CoA). This chain is GTP-dependent dephospho-CoA kinase, found in Korarchaeum cryptofilum (strain OPF8).